The primary structure comprises 48 residues: MAHPAQLGLQDASSPIXEELLHFHEDALMIVFLISTLVLYIITTTVST.

The Mitochondrial intermembrane segment spans residues 1–14 (MAHPAQLGLQDASS). The helical transmembrane segment at 15–45 (PIXEELLHFHEDALMIVFLISTLVLYIITTT) threads the bilayer. Residues 46–48 (VST) are Mitochondrial matrix-facing.

Belongs to the cytochrome c oxidase subunit 2 family. Component of the cytochrome c oxidase (complex IV, CIV), a multisubunit enzyme composed of 14 subunits. The complex is composed of a catalytic core of 3 subunits MT-CO1, MT-CO2 and MT-CO3, encoded in the mitochondrial DNA, and 11 supernumerary subunits COX4I, COX5A, COX5B, COX6A, COX6B, COX6C, COX7A, COX7B, COX7C, COX8 and NDUFA4, which are encoded in the nuclear genome. The complex exists as a monomer or a dimer and forms supercomplexes (SCs) in the inner mitochondrial membrane with NADH-ubiquinone oxidoreductase (complex I, CI) and ubiquinol-cytochrome c oxidoreductase (cytochrome b-c1 complex, complex III, CIII), resulting in different assemblies (supercomplex SCI(1)III(2)IV(1) and megacomplex MCI(2)III(2)IV(2)). Found in a complex with TMEM177, COA6, COX18, COX20, SCO1 and SCO2. Interacts with TMEM177 in a COX20-dependent manner. Interacts with COX20. Interacts with COX16. Cu cation serves as cofactor.

It localises to the mitochondrion inner membrane. It catalyses the reaction 4 Fe(II)-[cytochrome c] + O2 + 8 H(+)(in) = 4 Fe(III)-[cytochrome c] + 2 H2O + 4 H(+)(out). Its function is as follows. Component of the cytochrome c oxidase, the last enzyme in the mitochondrial electron transport chain which drives oxidative phosphorylation. The respiratory chain contains 3 multisubunit complexes succinate dehydrogenase (complex II, CII), ubiquinol-cytochrome c oxidoreductase (cytochrome b-c1 complex, complex III, CIII) and cytochrome c oxidase (complex IV, CIV), that cooperate to transfer electrons derived from NADH and succinate to molecular oxygen, creating an electrochemical gradient over the inner membrane that drives transmembrane transport and the ATP synthase. Cytochrome c oxidase is the component of the respiratory chain that catalyzes the reduction of oxygen to water. Electrons originating from reduced cytochrome c in the intermembrane space (IMS) are transferred via the dinuclear copper A center (CU(A)) of subunit 2 and heme A of subunit 1 to the active site in subunit 1, a binuclear center (BNC) formed by heme A3 and copper B (CU(B)). The BNC reduces molecular oxygen to 2 water molecules using 4 electrons from cytochrome c in the IMS and 4 protons from the mitochondrial matrix. This Polypterus sp. (Bichir) protein is Cytochrome c oxidase subunit 2 (mt-co2).